The following is a 131-amino-acid chain: Antileukoproteinase (131 aa).

The first 25 residues, 1 to 25 (MKSCGLLPFTVLLALGILAPWTVEG), serve as a signal peptide directing secretion. 2 WAP domains span residues 29–77 (DAIK…VNPV) and 83–131 (VWRK…LPPM). 8 disulfide bridges follow: C36–C65, C44–C69, C52–C64, C58–C73, C90–C119, C97–C123, C106–C118, and C112–C127. Residues 85–131 (RKPGRCVKTQARCMMLNPPNVCQRDGQCDGKYKCCEGICGKVCLPPM) form an elastase inhibitory domain region.

In terms of assembly, interacts with GRN; interaction protects progranulin from proteolysis. As to expression, detected in bronchial epithelial cells. Detected in bronchoalveolar fluid after infection with M.tuberculosis (at protein level). Highest expression in lung, spleen, intestine and epididymis with lower levels in liver and seminal vesicle. No expression in brain, heart, kidney and muscle.

It is found in the secreted. Functionally, acid-stable proteinase inhibitor with strong affinities for trypsin, chymotrypsin, elastase, and cathepsin G. Modulates the innate immune response after bacterial infection. Contributes to regulate the inflammatory and immune responses to the intracellular parasite L.major. Down-regulates responses to bacterial lipopolysaccharide (LPS). Plays a role in regulating the activation of NF-kappa-B and inflammatory responses. Has antimicrobial activity against mycobacteria, but not against salmonella. Contributes to normal resistance against infection by M.tuberculosis. Required for normal resistance to L.major. Required for normal wound healing, probably by preventing tissue damage by limiting protease activity. Together with ELANE, required for normal differentiation and proliferation of bone marrow myeloid cells. In Mus musculus (Mouse), this protein is Antileukoproteinase (Slpi).